The sequence spans 173 residues: Ribulose bisphosphate carboxylase small subunit, chloroplastic 1 (173 aa).

A chloroplast-targeting transit peptide spans 1 to 49; the sequence is MASIPATVATVAQANMVAPFTGLKANAAFPVTKKVNDFSTLPSNGGRVQ.

Belongs to the RuBisCO small chain family. Heterohexadecamer of 8 large and 8 small subunits.

Its subcellular location is the plastid. It is found in the chloroplast. Functionally, ruBisCO catalyzes two reactions: the carboxylation of D-ribulose 1,5-bisphosphate, the primary event in carbon dioxide fixation, as well as the oxidative fragmentation of the pentose substrate. Both reactions occur simultaneously and in competition at the same active site. Although the small subunit is not catalytic it is essential for maximal activity. The chain is Ribulose bisphosphate carboxylase small subunit, chloroplastic 1 from Flaveria pringlei.